The sequence spans 110 residues: MIVTTSPNIEGKQIIEYKKIVFGEVITGVNFMKDIGAGLRNFFGGRSQGYEDELINAREEAIREMEQRAKDIGANAVIGVDIDYEVLGADNGMLMVTASGTAVVIEAQDY.

This sequence belongs to the UPF0145 family.

The polypeptide is UPF0145 protein LMOf2365_0219 (Listeria monocytogenes serotype 4b (strain F2365)).